Here is a 334-residue protein sequence, read N- to C-terminus: Leucine-rich repeat-containing protein 26 (334 aa).

A signal peptide spans 1 to 26 (MRGPSWSRPRPLLLLLLLLSPWPVWA). Residues 27-261 (QVSATASPSG…HCAQPLALRD (235 aa)) are Extracellular-facing. Residues 34–71 (PSGSLGAPDCPEVCTCVPGGLASCSALSLPAVPPGLSL) form the LRRNT domain. Intrachain disulfides connect C43/C49 and C47/C57. LRR repeat units follow at residues 72-93 (RLRA…AFAG), 96-117 (ALQR…AFWG), 120-141 (ALQL…TFAP), 144-167 (ALRN…GALP), and 168-190 (LLRS…LGRL). N147 carries N-linked (GlcNAc...) asparagine glycosylation. One can recognise an LRRCT domain in the interval 201–255 (NPWGCGCALRPLCAWLRRHPLPASEAETVLCVWPGRLTLSPLTAFSDAAFSHCAQ). Disulfide bonds link C205–C231 and C207–C253. A helical membrane pass occupies residues 262 to 282 (LAVVYTLGPASFLVSLASCLA). Residues 283–334 (LGSGLTACRARRRRLRTAALRPPRPPDPNPDPDPHGCASPADPGSPAAAAQA) are Cytoplasmic-facing. Residues 298–334 (RTAALRPPRPPDPNPDPDPHGCASPADPGSPAAAAQA) are disordered. Pro residues predominate over residues 304–313 (PPRPPDPNPD). Residues 320-334 (ASPADPGSPAAAAQA) are compositionally biased toward low complexity.

Interacts with KCNMA1. In terms of tissue distribution, isoform 1 is expressed highly in normal prostate and salivary gland, very weakly in colon, pancreas, and intestine, and not at all in other tissues. Isoform 1 is expressed highly in many cancer cell lines and in breast cancer, pancreatic cancer and colon cancer. Isoform 2 is expressed in cancer cell lines.

The protein localises to the cell membrane. The protein resides in the cytoplasm. It is found in the cytoskeleton. Functionally, auxiliary protein of the large-conductance, voltage and calcium-activated potassium channel (BK alpha). Required for the conversion of BK alpha channels from a high-voltage to a low-voltage activated channel type in non-excitable cells. These are characterized by negative membrane voltages and constant low levels of calcium. The polypeptide is Leucine-rich repeat-containing protein 26 (LRRC26) (Homo sapiens (Human)).